The chain runs to 274 residues: Serine/threonine-protein kinase 1 (274 aa).

Residues 16–273 (AVLAPKVVNG…HSFLASRHDY (258 aa)) enclose the Protein kinase domain. ATP-binding positions include 22–30 (VVNGRFGKM) and Lys46. Asp134 serves as the catalytic Proton acceptor.

This sequence belongs to the protein kinase superfamily. Ser/Thr protein kinase family.

The enzyme catalyses L-seryl-[protein] + ATP = O-phospho-L-seryl-[protein] + ADP + H(+). It carries out the reaction L-threonyl-[protein] + ATP = O-phospho-L-threonyl-[protein] + ADP + H(+). The polypeptide is Serine/threonine-protein kinase 1 (PK1) (Orgyia pseudotsugata multicapsid polyhedrosis virus (OpMNPV)).